The sequence spans 148 residues: Small ribosomal subunit protein uS13 (148 aa).

It belongs to the universal ribosomal protein uS13 family. Part of the 30S ribosomal subunit. Forms a loose heterodimer with protein S19. Forms two bridges to the 50S subunit in the 70S ribosome.

Located at the top of the head of the 30S subunit, it contacts several helices of the 16S rRNA. In the 70S ribosome it contacts the 23S rRNA (bridge B1a) and protein L5 of the 50S subunit (bridge B1b), connecting the 2 subunits; these bridges are implicated in subunit movement. In Pyrococcus horikoshii (strain ATCC 700860 / DSM 12428 / JCM 9974 / NBRC 100139 / OT-3), this protein is Small ribosomal subunit protein uS13.